Consider the following 166-residue polypeptide: Sperm-egg fusion protein TMEM95 (166 aa).

An N-terminal signal peptide occupies residues M1–A16. 4 disulfides stabilise this stretch: C17/C118, C20/C121, C105/C128, and C109/C134. The Extracellular segment spans residues C17 to R145. N117 carries N-linked (GlcNAc...) asparagine glycosylation. The chain crosses the membrane as a helical span at residues I146 to V165. A topological domain (cytoplasmic) is located at residue E166.

Belongs to the TMEM95 family. As to quaternary structure, does not interact with sperm-egg fusion proteins IZUMO1 or IZUMO1R/JUNO. Post-translationally, N-glycosylated. Detected in testis and brain with higher levels in brain than testis.

Its subcellular location is the cytoplasmic vesicle. The protein resides in the secretory vesicle. The protein localises to the acrosome membrane. In terms of biological role, sperm protein required for fusion of sperm with the egg membrane during fertilization. The chain is Sperm-egg fusion protein TMEM95 from Bos taurus (Bovine).